Here is a 138-residue protein sequence, read N- to C-terminus: Acidic phospholipase A2 Cvv-E6e (138 aa).

The N-terminal stretch at 1–16 (MRTLWILAVLLLGVEG) is a signal peptide. 7 disulfide bridges follow: C42–C131, C44–C60, C59–C111, C65–C138, C66–C104, C73–C97, and C91–C102. 3 residues coordinate Ca(2+): Y43, G45, and G47. Residue H63 is part of the active site. D64 serves as a coordination point for Ca(2+). The active site involves D105.

Ca(2+) is required as a cofactor. As to expression, expressed by the venom gland.

Its subcellular location is the secreted. It catalyses the reaction a 1,2-diacyl-sn-glycero-3-phosphocholine + H2O = a 1-acyl-sn-glycero-3-phosphocholine + a fatty acid + H(+). Its function is as follows. Snake venom phospholipase A2 (PLA2) that significantly inhibits ADP-induced platelet aggregation in platelet-rich plasma of human, rabbit and guinea pig. PLA2 catalyzes the calcium-dependent hydrolysis of the 2-acyl groups in 3-sn-phosphoglycerides. The sequence is that of Acidic phospholipase A2 Cvv-E6e from Crotalus viridis viridis (Prairie rattlesnake).